We begin with the raw amino-acid sequence, 1025 residues long: Transcription factor tau 131 kDa subunit (1025 aa).

Residues 1-26 (MAAGKLKKEQQNQSAERESADTGKVN) show a composition bias toward basic and acidic residues. Positions 1-71 (MAAGKLKKEQ…EDEYNSERDS (71 aa)) are disordered. Acidic residues predominate over residues 46–65 (DEEYDDEDVPHDLQLSEDEY). 5 TPR repeats span residues 128–161 (VAQL…DARN), 162–195 (FAAY…NASD), 196–229 (WEFW…NPME), 230–263 (WESI…NPYD), and 264–297 (ANIL…NVER). The interval 128 to 569 (VAQLLSQANE…VDVVEMRKHQ (442 aa)) is sufficient to bind BDP1. The interval 309–334 (LDSSDEESAAEGEDADEKEPLEQDED) is disordered. Ser-311 is modified (phosphoserine). A compositionally biased stretch (acidic residues) spans 311-325 (SSDEESAAEGEDADE). TPR repeat units lie at residues 432–465 (IDIR…TFSD), 467–501 (ADLY…EWRT), 502–535 (TDVF…EPDD), 536–569 (LDIR…RKHQ), 875–908 (PYLY…IPDD), and 959–992 (QEAD…YDDG).

Component of the TFIIIC complex composed of TFC1, TFC3, TFC4, TFC6, TFC7 and TFC8. The subunits are organized in two globular domains, tauA and tauB, connected by a proteolysis-sensitive and flexible linker. Interacts with TFC1, TFC3, TFC6, TFIIIB subunits BRF1 and BDP1, and with RNA polymerase III subunit RPC10. Post-translationally, phosphorylated.

The protein localises to the nucleus. In terms of biological role, TFIIIC mediates tRNA and 5S RNA gene activation by binding to intragenic promoter elements. Upstream of the transcription start site, TFIIIC assembles the initiation complex TFIIIB-TFIIIC-tDNA, which is sufficient for RNA polymerase III recruitment and function. Part of the tauA domain of TFIIIC that binds boxA DNA promoter sites of tRNA and similar genes. TFC4 is the TFIIIB-assembling subunit of TFIIIC and essential for viability. In Saccharomyces cerevisiae (strain ATCC 204508 / S288c) (Baker's yeast), this protein is Transcription factor tau 131 kDa subunit (TFC4).